A 690-amino-acid chain; its full sequence is UvrABC system protein B (690 aa).

The 159-residue stretch at 30–188 (QGVMDGQTNQ…QELISLHFVR (159 aa)) folds into the Helicase ATP-binding domain. 43–50 (GVTGSGKT) contacts ATP. The Beta-hairpin motif lies at 96–119 (YYDFYQPEAYIPTMDKYIAKDLKI). The 167-residue stretch at 435–601 (QIDDLLEEIR…SIVKSVDQVL (167 aa)) folds into the Helicase C-terminal domain. The UVR domain occupies 641–676 (YAMAEELRLEMQEAAESMEFEKAAYLRDEVTKLEDA).

Belongs to the UvrB family. In terms of assembly, forms a heterotetramer with UvrA during the search for lesions. Interacts with UvrC in an incision complex.

Its subcellular location is the cytoplasm. In terms of biological role, the UvrABC repair system catalyzes the recognition and processing of DNA lesions. A damage recognition complex composed of 2 UvrA and 2 UvrB subunits scans DNA for abnormalities. Upon binding of the UvrA(2)B(2) complex to a putative damaged site, the DNA wraps around one UvrB monomer. DNA wrap is dependent on ATP binding by UvrB and probably causes local melting of the DNA helix, facilitating insertion of UvrB beta-hairpin between the DNA strands. Then UvrB probes one DNA strand for the presence of a lesion. If a lesion is found the UvrA subunits dissociate and the UvrB-DNA preincision complex is formed. This complex is subsequently bound by UvrC and the second UvrB is released. If no lesion is found, the DNA wraps around the other UvrB subunit that will check the other stand for damage. The protein is UvrABC system protein B of Chlorobium phaeobacteroides (strain BS1).